The primary structure comprises 685 residues: Kinesin-related protein 11 (685 aa).

The 402-residue stretch at 4–405 (NISVSVRARP…LKFASRAKKI (402 aa)) folds into the Kinesin motor domain. The disordered stretch occupies residues 36 to 105 (TSLPPPITQP…TTVPASPAPT (70 aa)). Low complexity predominate over residues 47–105 (SSLPPISTPIKSSSSSSTSTSAGSLKTPLKTPLKTPLKTPLKTNSTTTNTTVPASPAPT). 156–163 (GITSSGKT) provides a ligand contact to ATP. A coiled-coil region spans residues 411 to 488 (VNEILDDKAL…KINNLNKLIL (78 aa)). Positions 495 to 568 (NSASKGGSGS…QSTSSLTIGG (74 aa)) are disordered. Over residues 511–520 (RSTFVSPSQN) the composition is skewed to polar residues. The segment covering 533 to 565 (PNSFSNLLLQSPSQNNNNNSHISPLSQSTSSLT) has biased composition (low complexity). Positions 574–683 (FESNELIQIQ…LKSKIQEYEV (110 aa)) form a coiled coil.

It belongs to the TRAFAC class myosin-kinesin ATPase superfamily. Kinesin family.

It localises to the cytoplasm. The protein resides in the cytoskeleton. Its function is as follows. Microtubule-associated force-producing protein that plays a role in organelle transport. Its motor activity is directed toward the microtubule's plus end. The polypeptide is Kinesin-related protein 11 (kif11) (Dictyostelium discoideum (Social amoeba)).